Reading from the N-terminus, the 60-residue chain is Cecropin-B (60 aa).

Positions 1-25 are cleaved as a signal peptide; it reads MNFTKLFILVAIAVLVVVGVQPVDG. Residue L59 is modified to Leucine amide.

Belongs to the cecropin family.

Its subcellular location is the secreted. Its function is as follows. Cecropins have lytic and antibacterial activity against several Gram-positive and Gram-negative bacteria. This Anopheles gambiae (African malaria mosquito) protein is Cecropin-B (CecB).